The chain runs to 290 residues: Acetylglutamate kinase (290 aa).

Substrate is bound by residues 65-66 (GG), Arg87, and Asn186.

It belongs to the acetylglutamate kinase family. ArgB subfamily.

Its subcellular location is the cytoplasm. The enzyme catalyses N-acetyl-L-glutamate + ATP = N-acetyl-L-glutamyl 5-phosphate + ADP. Its pathway is amino-acid biosynthesis; L-arginine biosynthesis; N(2)-acetyl-L-ornithine from L-glutamate: step 2/4. Its function is as follows. Catalyzes the ATP-dependent phosphorylation of N-acetyl-L-glutamate. This Mycobacterium sp. (strain KMS) protein is Acetylglutamate kinase.